Consider the following 356-residue polypeptide: 3-isopropylmalate dehydrogenase (356 aa).

73–86 (GTQYDGLPREKRPE) contacts NAD(+). Positions 93, 103, 131, and 220 each coordinate substrate. The Mg(2+) site is built by Asp-220, Asp-244, and Asp-248. NAD(+) is bound at residue 278-290 (GSAPDIAGKGIAN).

Belongs to the isocitrate and isopropylmalate dehydrogenases family. LeuB type 1 subfamily. As to quaternary structure, homodimer. Mg(2+) is required as a cofactor. Mn(2+) serves as cofactor.

It is found in the cytoplasm. It catalyses the reaction (2R,3S)-3-isopropylmalate + NAD(+) = 4-methyl-2-oxopentanoate + CO2 + NADH. It participates in amino-acid biosynthesis; L-leucine biosynthesis; L-leucine from 3-methyl-2-oxobutanoate: step 3/4. Catalyzes the oxidation of 3-carboxy-2-hydroxy-4-methylpentanoate (3-isopropylmalate) to 3-carboxy-4-methyl-2-oxopentanoate. The product decarboxylates to 4-methyl-2 oxopentanoate. This Nitrosomonas europaea (strain ATCC 19718 / CIP 103999 / KCTC 2705 / NBRC 14298) protein is 3-isopropylmalate dehydrogenase.